A 102-amino-acid polypeptide reads, in one-letter code: MNIRPLHDRVIVERKEVESKSAGGIVLTGSAAEKSTRGVVLAVGKGRILENGTVLPLDVKVGDTVIFAEGYGTKTEKIDGKEVLVMSENDIMAIVDLIAIVE.

Belongs to the GroES chaperonin family. As to quaternary structure, heptamer of 7 subunits arranged in a ring. Interacts with the chaperonin GroEL.

It localises to the cytoplasm. In terms of biological role, together with the chaperonin GroEL, plays an essential role in assisting protein folding. The GroEL-GroES system forms a nano-cage that allows encapsulation of the non-native substrate proteins and provides a physical environment optimized to promote and accelerate protein folding. GroES binds to the apical surface of the GroEL ring, thereby capping the opening of the GroEL channel. The chain is Co-chaperonin GroES from Vibrio harveyi (Beneckea harveyi).